We begin with the raw amino-acid sequence, 146 residues long: Large ribosomal subunit protein uL15 (146 aa).

A disordered region spans residues 1–54 (MKLHELRPAAGSKSAPKRVGRGTGSGLGRNAGKGEKGQNARSGGGVRPGFEGGQ). Gly residues-rich tracts occupy residues 21-31 (RGTGSGLGRNA) and 42-52 (SGGGVRPGFEG).

This sequence belongs to the universal ribosomal protein uL15 family. As to quaternary structure, part of the 50S ribosomal subunit.

Functionally, binds to the 23S rRNA. In Clostridium perfringens (strain ATCC 13124 / DSM 756 / JCM 1290 / NCIMB 6125 / NCTC 8237 / Type A), this protein is Large ribosomal subunit protein uL15.